The following is a 269-amino-acid chain: Shikimate dehydrogenase (NADP(+)) (269 aa).

Residues 17–19 (SKS) and Thr64 each bind shikimate. Lys68 (proton acceptor) is an active-site residue. Asp80 serves as a coordination point for NADP(+). Residues Asn89 and Asp105 each contribute to the shikimate site. NADP(+) is bound by residues 130–134 (GAGGA), 154–159 (NRTHAK), and Met213. A shikimate-binding site is contributed by Tyr215. Position 237 (Gly237) interacts with NADP(+).

The protein belongs to the shikimate dehydrogenase family. As to quaternary structure, homodimer.

It catalyses the reaction shikimate + NADP(+) = 3-dehydroshikimate + NADPH + H(+). It participates in metabolic intermediate biosynthesis; chorismate biosynthesis; chorismate from D-erythrose 4-phosphate and phosphoenolpyruvate: step 4/7. In terms of biological role, involved in the biosynthesis of the chorismate, which leads to the biosynthesis of aromatic amino acids. Catalyzes the reversible NADPH linked reduction of 3-dehydroshikimate (DHSA) to yield shikimate (SA). The chain is Shikimate dehydrogenase (NADP(+)) from Neisseria polysaccharea.